Reading from the N-terminus, the 937-residue chain is Bifunctional glutamine synthetase adenylyltransferase/adenylyl-removing enzyme (937 aa).

The adenylyl removase stretch occupies residues 1 to 436 (MSQPIPSASP…AAEFAELLAP (436 aa)). Residues 443–937 (PDTLADYWRA…QLRFQPGKGA (495 aa)) are adenylyl transferase.

This sequence belongs to the GlnE family. Mg(2+) is required as a cofactor.

The enzyme catalyses [glutamine synthetase]-O(4)-(5'-adenylyl)-L-tyrosine + phosphate = [glutamine synthetase]-L-tyrosine + ADP. The catalysed reaction is [glutamine synthetase]-L-tyrosine + ATP = [glutamine synthetase]-O(4)-(5'-adenylyl)-L-tyrosine + diphosphate. Functionally, involved in the regulation of glutamine synthetase GlnA, a key enzyme in the process to assimilate ammonia. When cellular nitrogen levels are high, the C-terminal adenylyl transferase (AT) inactivates GlnA by covalent transfer of an adenylyl group from ATP to specific tyrosine residue of GlnA, thus reducing its activity. Conversely, when nitrogen levels are low, the N-terminal adenylyl removase (AR) activates GlnA by removing the adenylyl group by phosphorolysis, increasing its activity. The regulatory region of GlnE binds the signal transduction protein PII (GlnB) which indicates the nitrogen status of the cell. The polypeptide is Bifunctional glutamine synthetase adenylyltransferase/adenylyl-removing enzyme (Xanthomonas campestris pv. campestris (strain B100)).